Here is a 118-residue protein sequence, read N- to C-terminus: Basic phospholipase A2 4 (118 aa).

Disulfide bonds link Cys-11-Cys-71, Cys-27-Cys-117, Cys-29-Cys-45, Cys-44-Cys-98, Cys-51-Cys-91, Cys-60-Cys-84, and Cys-78-Cys-89. Residues Tyr-28, Gly-30, and Gly-32 each contribute to the Ca(2+) site. His-48 is a catalytic residue. Asp-49 provides a ligand contact to Ca(2+). Asp-92 is an active-site residue.

Belongs to the phospholipase A2 family. Group I subfamily. D49 sub-subfamily. As to quaternary structure, monomer. The cofactor is Ca(2+). In terms of tissue distribution, expressed by the venom gland.

The protein localises to the secreted. It catalyses the reaction a 1,2-diacyl-sn-glycero-3-phosphocholine + H2O = a 1-acyl-sn-glycero-3-phosphocholine + a fatty acid + H(+). PLA2 catalyzes the calcium-dependent hydrolysis of the 2-acyl groups in 3-sn-phosphoglycerides. In Laticauda semifasciata (Black-banded sea krait), this protein is Basic phospholipase A2 4.